Here is a 715-residue protein sequence, read N- to C-terminus: Fatty acid oxidation complex subunit alpha (715 aa).

Residues 1 to 190 (MIYEGKAITV…KVGAVDAVVA (190 aa)) are enoyl-CoA hydratase/isomerase. Position 297 (aspartate 297) interacts with substrate. Residues 312–715 (HDVKQAAVLG…MAKNGQRFFN (404 aa)) are 3-hydroxyacyl-CoA dehydrogenase. NAD(+) is bound by residues methionine 325, aspartate 344, 401–403 (VVE), lysine 408, and serine 430. Histidine 451 (for 3-hydroxyacyl-CoA dehydrogenase activity) is an active-site residue. An NAD(+)-binding site is contributed by asparagine 454. 2 residues coordinate substrate: asparagine 501 and tyrosine 660.

In the N-terminal section; belongs to the enoyl-CoA hydratase/isomerase family. The protein in the C-terminal section; belongs to the 3-hydroxyacyl-CoA dehydrogenase family. In terms of assembly, heterotetramer of two alpha chains (FadB) and two beta chains (FadA).

It carries out the reaction a (3S)-3-hydroxyacyl-CoA + NAD(+) = a 3-oxoacyl-CoA + NADH + H(+). The catalysed reaction is a (3S)-3-hydroxyacyl-CoA = a (2E)-enoyl-CoA + H2O. It catalyses the reaction a 4-saturated-(3S)-3-hydroxyacyl-CoA = a (3E)-enoyl-CoA + H2O. The enzyme catalyses (3S)-3-hydroxybutanoyl-CoA = (3R)-3-hydroxybutanoyl-CoA. It carries out the reaction a (3Z)-enoyl-CoA = a 4-saturated (2E)-enoyl-CoA. The catalysed reaction is a (3E)-enoyl-CoA = a 4-saturated (2E)-enoyl-CoA. It functions in the pathway lipid metabolism; fatty acid beta-oxidation. Functionally, involved in the aerobic and anaerobic degradation of long-chain fatty acids via beta-oxidation cycle. Catalyzes the formation of 3-oxoacyl-CoA from enoyl-CoA via L-3-hydroxyacyl-CoA. It can also use D-3-hydroxyacyl-CoA and cis-3-enoyl-CoA as substrate. The polypeptide is Fatty acid oxidation complex subunit alpha (Pseudomonas entomophila (strain L48)).